The primary structure comprises 177 residues: MVTEFRDAWEARYGLVPGACCLKNSVTFSSLESGQGLERNPNQEALADRKNKKCQFKNEYVACHATVFPHFVNPENPKAVEFLKNHPLNIPVNMDMTFGPLKDTPAFCYGGHKLGLCNSLYDSIIYDDTYQGKGEHNLKKFFSEAIATCFLYQNAIKPINYKPKNMKHSVIGVSLYY.

The protein localises to the plastid. It is found in the chloroplast. This is an uncharacterized protein from Chlorella vulgaris (Green alga).